Here is a 452-residue protein sequence, read N- to C-terminus: Caspase-2 (452 aa).

An N-acetylalanine modification is found at A2. A propeptide spanning residues 2-169 (AAPSAGSWST…TVEHSLDNKD (168 aa)) is cleaved from the precursor. The region spanning 32-121 (MHPHHQETLK…GHLEDMLLTT (90 aa)) is the CARD domain. S157 is modified (phosphoserine). Residues H277 and C320 contribute to the active site. Residues 326-333 (DRGVDQQD) constitute a propeptide that is removed on maturation. Residues 327-336 (RGVDQQDGKN) show a composition bias toward basic and acidic residues. The segment at 327–354 (RGVDQQDGKNHAGSPGCEESDAGKEKLP) is disordered. A Phosphoserine modification is found at S340.

Belongs to the peptidase C14A family. Heterotetramer that consists of two anti-parallel arranged heterodimers, each one formed by a p18 subunit and a p12 subunit. Forms a complex named the PIDDosome with PIDD1 and CRADD. Interacts with NOL3 (via CARD domain); inhibits CASP2 activity in a phosphorylation-dependent manner. Post-translationally, the mature protease can process its own propeptide, but not that of other caspases. As to expression, expressed at higher levels in the embryonic lung, liver and kidney than in the heart and brain. In adults, higher level expression is seen in the placenta, lung, kidney, and pancreas than in the heart, brain, liver and skeletal muscle.

The enzyme catalyses Strict requirement for an Asp residue at P1, with 316-Asp being essential for proteolytic activity and has a preferred cleavage sequence of Val-Asp-Val-Ala-Asp-|-.. In terms of biological role, is a regulator of the cascade of caspases responsible for apoptosis execution. Might function by either activating some proteins required for cell death or inactivating proteins necessary for cell survival. Associates with PIDD1 and CRADD to form the PIDDosome, a complex that activates CASP2 and triggers apoptosis in response to genotoxic stress. Functionally, acts as a positive regulator of apoptosis. Its function is as follows. Acts as a negative regulator of apoptosis. May function as an endogenous apoptosis inhibitor that antagonizes caspase activation and cell death. The protein is Caspase-2 (CASP2) of Homo sapiens (Human).